A 156-amino-acid chain; its full sequence is Small ribosomal subunit protein uS7 (156 aa).

The protein belongs to the universal ribosomal protein uS7 family. In terms of assembly, part of the 30S ribosomal subunit. Contacts proteins S9 and S11.

Functionally, one of the primary rRNA binding proteins, it binds directly to 16S rRNA where it nucleates assembly of the head domain of the 30S subunit. Is located at the subunit interface close to the decoding center, probably blocks exit of the E-site tRNA. The chain is Small ribosomal subunit protein uS7 from Lactobacillus johnsonii (strain CNCM I-12250 / La1 / NCC 533).